We begin with the raw amino-acid sequence, 95 residues long: MKLRPLQDRILVKRIEEEQVTAGGIFIPDTAKEKPQRGEIVAVGNGKKTEDGKVIPIDLKVGDKVLFGKYAGTDIKVEGEDFLIMREDDILGVIE.

The protein belongs to the GroES chaperonin family. Heptamer of 7 subunits arranged in a ring. Interacts with the chaperonin GroEL.

The protein localises to the cytoplasm. Functionally, together with the chaperonin GroEL, plays an essential role in assisting protein folding. The GroEL-GroES system forms a nano-cage that allows encapsulation of the non-native substrate proteins and provides a physical environment optimized to promote and accelerate protein folding. GroES binds to the apical surface of the GroEL ring, thereby capping the opening of the GroEL channel. This Geobacter metallireducens (strain ATCC 53774 / DSM 7210 / GS-15) protein is Co-chaperonin GroES.